The chain runs to 440 residues: C4-dicarboxylate transport protein (440 aa).

Transmembrane regions (helical) follow at residues 8 to 28, 40 to 60, 74 to 94, 147 to 167, 187 to 207, 221 to 241, 288 to 308, and 354 to 374; these read LYLQ…LFPA, FIKL…VTGI, LKGL…GLVV, GDIL…AALK, IVGF…AFTV, LIAC…GLVL, VVGL…SIYL, and AATL…LLGV. The segment at 419–440 is disordered; that stretch reads EEVEPANEPEPPAIPAGAGLHG.

The protein belongs to the dicarboxylate/amino acid:cation symporter (DAACS) (TC 2.A.23) family.

The protein resides in the cell inner membrane. Responsible for the transport of dicarboxylates such as succinate, fumarate, and malate from the periplasm across the membrane. This is C4-dicarboxylate transport protein from Anaeromyxobacter sp. (strain K).